An 852-amino-acid polypeptide reads, in one-letter code: DNA polymerase kappa (852 aa).

Residues 102–357 form the UmuC domain; the sequence is IVHVDMDAFY…LPIRKVSGIG (256 aa). Mg(2+)-binding residues include aspartate 106 and aspartate 197. The segment at 252–273 is disordered; sequence FEDSPPDLQPQGSPFQLNSEEQ. Residues 261–273 are compositionally biased toward polar residues; that stretch reads PQGSPFQLNSEEQ. 2 consecutive UBZ4-type zinc fingers follow at residues 619–649 and 761–791; these read TFICPVCFREQEGVSLEAFNEHVDECLDGPS and ALVCPVCNLEQETSDLTLFNIHVDICLNKGI. 8 residues coordinate Zn(2+): cysteine 622, cysteine 625, histidine 640, cysteine 644, cysteine 764, cysteine 767, histidine 782, and cysteine 786. The tract at residues 798–852 is disordered; it reads SEGNSVKQPKESSRSTDRLQKASGRTKRPGTKTKSSTLKKTKPRDPRHTLDGFFK. Basic and acidic residues predominate over residues 805–817; that stretch reads QPKESSRSTDRLQ. Residues 821-839 are compositionally biased toward basic residues; it reads GRTKRPGTKTKSSTLKKTK. Residues 840–852 show a composition bias toward basic and acidic residues; sequence PRDPRHTLDGFFK.

It belongs to the DNA polymerase type-Y family. In terms of assembly, interacts with PCNA. Interacts with REV1. Requires Mg(2+) as cofactor. It depends on Mn(2+) as a cofactor. As to expression, detected at low levels in heart, brain, lung, liver, kidney and testis.

It localises to the nucleus. The catalysed reaction is DNA(n) + a 2'-deoxyribonucleoside 5'-triphosphate = DNA(n+1) + diphosphate. Functionally, DNA polymerase specifically involved in DNA repair. Plays an important role in translesion synthesis, where the normal high-fidelity DNA polymerases cannot proceed and DNA synthesis stalls. Depending on the context, it inserts the correct base, but causes frequent base transitions, transversions and frameshifts. Lacks 3'-5' proofreading exonuclease activity. Forms a Schiff base with 5'-deoxyribose phosphate at abasic sites, but does not have lyase activity. The protein is DNA polymerase kappa (Polk) of Mus musculus (Mouse).